The sequence spans 334 residues: MRKVVLITGASSGIGLALCGRLLAEDDDLHLCLACRNLSKAGAVRDALLASHPSAEVSIVQMDVSNLQSVVRGAEEVKRRFQRLDYLYLNAGIMPNPQLNLKAFFCGIFSRNVIHMFSTAEGLLTQNDKITADGFQEVFETNLFGHFILIRELEPLLCHSDNPSQLIWTSSRNAKKSNFSLEDIQHAKGQEPYSSSKYATDLLNVALNRNFNQKGLYSSVTCPGVVMTNLTYGILPPFVWTLLLPVIWLLRFFAHAFTVTPYNGAEALVWLFHQKPESLNPLTKYLSGTTGLGTNYVKGQKMDVDEDTAEKFYKTLLELEKQVRITIQKSDHHS.

Residues 1–229 are Extracellular-facing; that stretch reads MRKVVLITGA…VTCPGVVMTN (229 aa). 8–15 is an NAD(+) binding site; that stretch reads TGASSGIG. N37 carries an N-linked (GlcNAc...) asparagine glycan. S171 contributes to the substrate binding site. Residue N178 is glycosylated (N-linked (GlcNAc...) asparagine). The active-site Proton acceptor is Y193. N229 is a glycosylation site (N-linked (GlcNAc...) asparagine). The chain crosses the membrane as a helical span at residues 230–250; it reads LTYGILPPFVWTLLLPVIWLL. The Cytoplasmic segment spans residues 251 to 334; the sequence is RFFAHAFTVT…ITIQKSDHHS (84 aa).

The protein belongs to the short-chain dehydrogenases/reductases (SDR) family. ERG27 subfamily. As to quaternary structure, binds to the short form of prolactin receptor. Post-translationally, phosphorylated. Most abundant in ovaries of pregnant animals.

Its subcellular location is the endoplasmic reticulum membrane. It carries out the reaction 17beta-estradiol + NADP(+) = estrone + NADPH + H(+). It catalyses the reaction a 3beta-hydroxysteroid + NADP(+) = a 3-oxosteroid + NADPH + H(+). The catalysed reaction is 4alpha-methyl-5alpha-cholest-7-en-3beta-ol + NADP(+) = 4alpha-methyl-5alpha-cholest-7-en-3-one + NADPH + H(+). The enzyme catalyses 4alpha-methyl-5alpha-cholest-8-en-3-one + NADPH + H(+) = 4alpha-methyl-5alpha-cholest-8-en-3beta-ol + NADP(+). It carries out the reaction 3-dehydro-4alpha-methylzymosterol + NADPH + H(+) = 4alpha-methylzymosterol + NADP(+). It catalyses the reaction zymosterone + NADPH + H(+) = zymosterol + NADP(+). The catalysed reaction is 5alpha-cholest-8-en-3-one + NADPH + H(+) = 5alpha-cholest-8-en-3beta-ol + NADP(+). The enzyme catalyses 5alpha-androstane-3beta,17beta-diol + NADP(+) = 17beta-hydroxy-5alpha-androstan-3-one + NADPH + H(+). It carries out the reaction 5alpha-androstane-3alpha,17beta-diol + NADP(+) = 17beta-hydroxy-5alpha-androstan-3-one + NADPH + H(+). The protein operates within steroid biosynthesis; estrogen biosynthesis. It functions in the pathway steroid biosynthesis; zymosterol biosynthesis; zymosterol from lanosterol: step 5/6. Functionally, bifunctional enzyme involved in steroid-hormone metabolism and cholesterol biosynthesis. Catalyzes the NADP(H)-dependent reduction of estrogens and androgens and regulates the biological potency of these steroids. Converts estrone (E1) to a more potent estrogen, 17beta-estradiol (E2). Converts dihydrotestosterone (DHT) to an inactive form. Also participates in the post-squalene cholesterol biosynthesis, as a 3-ketosteroid reductase. The chain is 3-keto-steroid reductase/17-beta-hydroxysteroid dehydrogenase 7 (Hsd17b7) from Rattus norvegicus (Rat).